An 822-amino-acid chain; its full sequence is DNA gyrase subunit A (822 aa).

In terms of domain architecture, Topo IIA-type catalytic spans 32–497 (LPDVRDGLKP…QVLSLEDEDL (466 aa)). Y120 serves as the catalytic O-(5'-phospho-DNA)-tyrosine intermediate. A GyrA-box motif is present at residues 524–530 (QKRGGRG).

This sequence belongs to the type II topoisomerase GyrA/ParC subunit family. As to quaternary structure, heterotetramer, composed of two GyrA and two GyrB chains. In the heterotetramer, GyrA contains the active site tyrosine that forms a transient covalent intermediate with DNA, while GyrB binds cofactors and catalyzes ATP hydrolysis.

The protein resides in the cytoplasm. The enzyme catalyses ATP-dependent breakage, passage and rejoining of double-stranded DNA.. Functionally, a type II topoisomerase that negatively supercoils closed circular double-stranded (ds) DNA in an ATP-dependent manner to modulate DNA topology and maintain chromosomes in an underwound state. Negative supercoiling favors strand separation, and DNA replication, transcription, recombination and repair, all of which involve strand separation. Also able to catalyze the interconversion of other topological isomers of dsDNA rings, including catenanes and knotted rings. Type II topoisomerases break and join 2 DNA strands simultaneously in an ATP-dependent manner. This Streptococcus pneumoniae (strain ATCC BAA-255 / R6) protein is DNA gyrase subunit A.